Consider the following 122-residue polypeptide: Large ribosomal subunit protein uL14c (122 aa).

This sequence belongs to the universal ribosomal protein uL14 family. As to quaternary structure, part of the 50S ribosomal subunit.

The protein localises to the plastid. It localises to the chloroplast. Binds to 23S rRNA. The chain is Large ribosomal subunit protein uL14c from Acorus calamus (Sweet flag).